A 122-amino-acid chain; its full sequence is Basic phospholipase A2 homolog myotoxin II (122 aa).

Disulfide bonds link C26–C116, C28–C44, C43–C95, C49–C122, C50–C88, C57–C81, and C75–C86. Positions 105 to 118 (KKYRYNYLKPFCKK) are important for membrane-damaging activities in eukaryotes and bacteria; heparin-binding.

Belongs to the phospholipase A2 family. Group II subfamily. K49 sub-subfamily. As to quaternary structure, homodimer; non-covalently linked (probable alternative/compact dimer conformation). In terms of tissue distribution, expressed by the venom gland.

It is found in the secreted. Its activity is regulated as follows. Myotoxic activity is inhibited by suramin and rosmarinic acid. Cytotoxic and myotoxic activities are inhibited by pre-incubation with varespladib. Suramin inhibits this myotoxin by (i) direct blockage of the MDoS and MDiS, preventing the toxin/membrane interaction and disruption and (ii) formation of an oligomeric complex, resulting in a tetrameric configuration for which both MDoS and MDiS becomes physically inaccessible, thus avoiding any possibility of toxin-membrane interaction or disruption. Heparin completely inhibits the cytotoxic and bactericidal activities, but only partially the myotoxic, edema-inducing and lethal effects. Snake venom phospholipase A2 (PLA2) homolog that lacks enzymatic activity. Shows high myotoxin activities. Also shows neurotoxicity, since it induces muscle paralysis when tested on mouse phrenic-diaphragm preparations. Displays edema-inducing activities. Also displays antimicrobial activity against E.coli and C.albicans, as well as antitumoral activity against some human and mice cell lines. In addition, it is effective as parasiticidal agent against Leishmania sp. and S.mansoni. It also disrupts negatively charged liposomes in a dose- and temperature-dependent manner and shows toxicity by intraperitoneal route. In contrast to other phospholipase A2-like toxins, this myotoxin does not require fatty acid binding to be active. This chain is Basic phospholipase A2 homolog myotoxin II, found in Bothrops moojeni (Lance-headed viper).